Here is a 238-residue protein sequence, read N- to C-terminus: MRLSEILTVALVTGATAYNLPNNLKQIYDKHKGKCSKVLAKGFTNGDASQGKSFSYCGDIPGAIFISSSKGYTNMDIDCDGANNSAGKCANDPSGQGETAFKSDVKKFGISDLDANIHPYVVFGNEDHSPKFKPQSHGMQPLSVMAVVCNGQLHYGIWGDTNGGVSTGEASISLADLCFPNEHLDGNHGHDPNDVLFIGFTSKDAVPGATAKWKAKNAKEFEDSIKSIGDKLVAGLKA.

An N-terminal signal peptide occupies residues 1-17 (MRLSEILTVALVTGATA). The N-linked (GlcNAc...) asparagine glycan is linked to N83.

Belongs to the glycosyl hydrolase 75 family.

The protein resides in the secreted. It carries out the reaction Endohydrolysis of beta-(1-&gt;4)-linkages between D-glucosamine residues in a partly acetylated chitosan.. Its function is as follows. Chitosanase catalyzing the endo-type cleavage of chitosan, the deacylated form of chitin. Chitosanase may be crucial in the degradation of the deacetylated portion of chitin in the fungal cell wall. Chitoolisaccharides produced by the hydrolysis of partially N-acetylated chitosan are known to have many biological activities, including antibacterial activity, immune-enhancing effects, and elicitor activity. The chitosans with higher degrees of deacetylation were shown to be the better substrates. Chitodimer, chitotrimer, and chitotetramer are the major products but monoacetyl chitodimer, monoacetyl chitotrimer, and monoacetyl chitotetramer are also produced. This chain is Endo-chitosanase (csn), found in Aspergillus fumigatus (Neosartorya fumigata).